A 501-amino-acid polypeptide reads, in one-letter code: Glucose-6-phosphate isomerase (501 aa).

The disordered stretch occupies residues 78–101; the sequence is GIANPTENRAAEHSAERGDGAPES. Basic and acidic residues predominate over residues 86-97; sequence RAAEHSAERGDG. The active-site Proton donor is the E333. Catalysis depends on residues H364 and K474.

It belongs to the GPI family.

It localises to the cytoplasm. The catalysed reaction is alpha-D-glucose 6-phosphate = beta-D-fructose 6-phosphate. It participates in carbohydrate biosynthesis; gluconeogenesis. The protein operates within carbohydrate degradation; glycolysis; D-glyceraldehyde 3-phosphate and glycerone phosphate from D-glucose: step 2/4. Catalyzes the reversible isomerization of glucose-6-phosphate to fructose-6-phosphate. The chain is Glucose-6-phosphate isomerase from Sphingopyxis alaskensis (strain DSM 13593 / LMG 18877 / RB2256) (Sphingomonas alaskensis).